The primary structure comprises 218 residues: Glutathione S-transferase Mu 5 (218 aa).

One can recognise a GST N-terminal domain in the interval 2–88; the sequence is PMTLGYWDIR…YIARKHNLCG (87 aa). Glutathione contacts are provided by residues 7–8, 46–50, 59–60, and 72–73; these read YW, WLNEK, NL, and QS. The GST C-terminal domain maps to 90–207; the sequence is TEEEKIRVDI…MKSSQFLRGL (118 aa). A substrate-binding site is contributed by Tyr-116.

Belongs to the GST superfamily. Mu family. Homodimer.

The protein resides in the cytoplasm. The catalysed reaction is RX + glutathione = an S-substituted glutathione + a halide anion + H(+). Conjugation of reduced glutathione to a wide number of exogenous and endogenous hydrophobic electrophiles. This chain is Glutathione S-transferase Mu 5 (GSTM5), found in Homo sapiens (Human).